Consider the following 106-residue polypeptide: SH3 domain-binding glutamic acid-rich-like protein 2 (106 aa).

The SH3-binding motif lies at 61–67 (QGNPLPP).

Belongs to the SH3BGR family.

It is found in the nucleus. The sequence is that of SH3 domain-binding glutamic acid-rich-like protein 2 (sh3bgrl2) from Xenopus tropicalis (Western clawed frog).